A 62-amino-acid chain; its full sequence is Ferredoxin-1 (62 aa).

2 4Fe-4S ferredoxin-type domains span residues 3–32 (WTVT…LQDG) and 33–62 (KAVP…VEEN). 2 residues coordinate [3Fe-4S] cluster: Cys-12 and Cys-18. [4Fe-4S] cluster-binding residues include Cys-22, Cys-42, Cys-45, and Cys-48. Cys-52 contacts [3Fe-4S] cluster.

As to quaternary structure, homodimer. [3Fe-4S] cluster is required as a cofactor. Requires [4Fe-4S] cluster as cofactor.

Functionally, ferredoxins are iron-sulfur proteins that transfer electrons in a wide variety of metabolic reactions. This ferredoxin serves as a carrier for pyruvate dehydrogenase. This chain is Ferredoxin-1, found in Nitratidesulfovibrio vulgaris (strain DSM 19637 / Miyazaki F) (Desulfovibrio vulgaris).